A 206-amino-acid chain; its full sequence is Small ribosomal subunit protein uS4 (206 aa).

Residues Thr96–Ile156 form the S4 RNA-binding domain.

It belongs to the universal ribosomal protein uS4 family. In terms of assembly, part of the 30S ribosomal subunit. Contacts protein S5. The interaction surface between S4 and S5 is involved in control of translational fidelity.

Its function is as follows. One of the primary rRNA binding proteins, it binds directly to 16S rRNA where it nucleates assembly of the body of the 30S subunit. Functionally, with S5 and S12 plays an important role in translational accuracy. The protein is Small ribosomal subunit protein uS4 of Shewanella woodyi (strain ATCC 51908 / MS32).